Reading from the N-terminus, the 55-residue chain is Large ribosomal subunit protein bL33 (55 aa).

The protein belongs to the bacterial ribosomal protein bL33 family.

This Buchnera aphidicola subsp. Acyrthosiphon pisum (strain APS) (Acyrthosiphon pisum symbiotic bacterium) protein is Large ribosomal subunit protein bL33 (rpmG).